The sequence spans 143 residues: MHIEHISGETVGEVRIVSDMHERKATMAQEAGAFIALLGERYETMEELLEMITWAQLGIHKKTVGLLNVDGYYNNLLAFFDTGVEEGFIKQGACNIVVSAPSARELMEKMELYTPSHKYIASHQSWKVEPLGDYPLLNENKPQ.

Residues 23-24, 41-47, and Thr53 contribute to the substrate site; these read RK and RYETMEE.

This sequence belongs to the LOG family.

It catalyses the reaction N(6)-(dimethylallyl)adenosine 5'-phosphate + H2O = N(6)-dimethylallyladenine + D-ribose 5-phosphate. The catalysed reaction is 9-ribosyl-trans-zeatin 5'-phosphate + H2O = trans-zeatin + D-ribose 5-phosphate. Cytokinin-activating enzyme working in the direct activation pathway. Phosphoribohydrolase that converts inactive cytokinin nucleotides to the biologically active free-base forms. This chain is Putative cytokinin riboside 5'-monophosphate phosphoribohydrolase LOG9 (LOG9), found in Arabidopsis thaliana (Mouse-ear cress).